Reading from the N-terminus, the 512-residue chain is Cytochrome P450 monooxygenase TwmD (512 aa).

Heme is bound at residue C454.

This sequence belongs to the cytochrome P450 family. It depends on heme as a cofactor.

Its pathway is secondary metabolite biosynthesis. Cytochrome P450 monooxygenase; part of the gene cluster that mediates the biosynthesis of wortmanamides A and B, reduced long-chain polyketides amidated with a specific omega-amino acid, 5-aminopentanoic acid (5PA). The PKS modules of TwmB are involved in the synthesis of the polyketide backbone, whereas the non-canonical C domain of TwmB is a bonafide condensation domain that specifically selects 5PA and catalyzes amidation to release polyketide chain. The C domain clearly prefers C16 and C18 fatty acyl substrates, which is consistent with simultaneous formation of both octaketide and nonaketide acyl amides wortmanamides A and B. Because TwmB lacks a designated enoylreductase (ER) domain, the required activity is provided the enoyl reductase TwmE. The roles of the remaining enzymes have still to be clarified. The sequence is that of Cytochrome P450 monooxygenase TwmD from Talaromyces wortmannii (Penicillium wortmannii).